Here is a 509-residue protein sequence, read N- to C-terminus: UDP-N-acetylmuramoyl-L-alanyl-D-glutamate--2,6-diaminopimelate ligase (509 aa).

Ser32 serves as a coordination point for UDP-N-acetyl-alpha-D-muramoyl-L-alanyl-D-glutamate. An ATP-binding site is contributed by 117–123; sequence GTNGKTT. Residues 159–160, Ser186, Gln192, and Arg194 each bind UDP-N-acetyl-alpha-D-muramoyl-L-alanyl-D-glutamate; that span reads TT. Lys226 carries the post-translational modification N6-carboxylysine. Residues Arg401, 425 to 428, Gly476, and Glu480 each bind meso-2,6-diaminopimelate; that span reads DNPR. A Meso-diaminopimelate recognition motif motif is present at residues 425–428; sequence DNPR.

This sequence belongs to the MurCDEF family. MurE subfamily. It depends on Mg(2+) as a cofactor. In terms of processing, carboxylation is probably crucial for Mg(2+) binding and, consequently, for the gamma-phosphate positioning of ATP.

The protein localises to the cytoplasm. The enzyme catalyses UDP-N-acetyl-alpha-D-muramoyl-L-alanyl-D-glutamate + meso-2,6-diaminopimelate + ATP = UDP-N-acetyl-alpha-D-muramoyl-L-alanyl-gamma-D-glutamyl-meso-2,6-diaminopimelate + ADP + phosphate + H(+). It functions in the pathway cell wall biogenesis; peptidoglycan biosynthesis. In terms of biological role, catalyzes the addition of meso-diaminopimelic acid to the nucleotide precursor UDP-N-acetylmuramoyl-L-alanyl-D-glutamate (UMAG) in the biosynthesis of bacterial cell-wall peptidoglycan. The chain is UDP-N-acetylmuramoyl-L-alanyl-D-glutamate--2,6-diaminopimelate ligase from Prochlorococcus marinus (strain NATL1A).